We begin with the raw amino-acid sequence, 107 residues long: Large ribosomal subunit protein eL33B (107 aa).

Residue A2 is modified to N-acetylalanine; partial. Residue K47 forms a Glycyl lysine isopeptide (Lys-Gly) (interchain with G-Cter in ubiquitin) linkage.

The protein belongs to the eukaryotic ribosomal protein eL33 family. As to quaternary structure, component of the large ribosomal subunit (LSU). Mature yeast ribosomes consist of a small (40S) and a large (60S) subunit. The 40S small subunit contains 1 molecule of ribosomal RNA (18S rRNA) and 33 different proteins (encoded by 57 genes). The large 60S subunit contains 3 rRNA molecules (25S, 5.8S and 5S rRNA) and 46 different proteins (encoded by 81 genes). N-terminally acetylated by acetyltransferase NatA.

It localises to the cytoplasm. Its function is as follows. Component of the ribosome, a large ribonucleoprotein complex responsible for the synthesis of proteins in the cell. The small ribosomal subunit (SSU) binds messenger RNAs (mRNAs) and translates the encoded message by selecting cognate aminoacyl-transfer RNA (tRNA) molecules. The large subunit (LSU) contains the ribosomal catalytic site termed the peptidyl transferase center (PTC), which catalyzes the formation of peptide bonds, thereby polymerizing the amino acids delivered by tRNAs into a polypeptide chain. The nascent polypeptides leave the ribosome through a tunnel in the LSU and interact with protein factors that function in enzymatic processing, targeting, and the membrane insertion of nascent chains at the exit of the ribosomal tunnel. This Saccharomyces cerevisiae (strain ATCC 204508 / S288c) (Baker's yeast) protein is Large ribosomal subunit protein eL33B.